The primary structure comprises 299 residues: tRNA dimethylallyltransferase (299 aa).

ATP is bound at residue 13–20 (GPTASGKT). 15–20 (TASGKT) provides a ligand contact to substrate. Residues 38 to 41 (DSRQ) form an interaction with substrate tRNA region.

The protein belongs to the IPP transferase family. As to quaternary structure, monomer. Requires Mg(2+) as cofactor.

It catalyses the reaction adenosine(37) in tRNA + dimethylallyl diphosphate = N(6)-dimethylallyladenosine(37) in tRNA + diphosphate. In terms of biological role, catalyzes the transfer of a dimethylallyl group onto the adenine at position 37 in tRNAs that read codons beginning with uridine, leading to the formation of N6-(dimethylallyl)adenosine (i(6)A). This Synechococcus sp. (strain CC9605) protein is tRNA dimethylallyltransferase.